The primary structure comprises 257 residues: Probable 6-phosphogluconolactonase (257 aa).

The protein belongs to the glucosamine/galactosamine-6-phosphate isomerase family. 6-phosphogluconolactonase subfamily.

The catalysed reaction is 6-phospho-D-glucono-1,5-lactone + H2O = 6-phospho-D-gluconate + H(+). It participates in carbohydrate degradation; pentose phosphate pathway; D-ribulose 5-phosphate from D-glucose 6-phosphate (oxidative stage): step 2/3. In terms of biological role, hydrolysis of 6-phosphogluconolactone to 6-phosphogluconate. In Schizosaccharomyces pombe (strain 972 / ATCC 24843) (Fission yeast), this protein is Probable 6-phosphogluconolactonase.